A 76-amino-acid polypeptide reads, in one-letter code: Conotoxin Ca11b (76 aa).

An N-terminal signal peptide occupies residues 1–19; the sequence is MKLVLAIVVILMLLSLSTG. The propeptide occupies 20–42; sequence AEMSDNHASMSANALRDRLLGPK. 4 disulfide bridges follow: cysteine 46-cysteine 60, cysteine 53-cysteine 65, cysteine 59-cysteine 69, and cysteine 64-cysteine 76.

As to expression, expressed by the venom duct.

The protein resides in the secreted. This chain is Conotoxin Ca11b, found in Conus caracteristicus (Characteristic cone).